The following is a 418-amino-acid chain: Tyrosine--tRNA ligase (418 aa).

Tyr-34 is an L-tyrosine binding site. Positions 39-48 match the 'HIGH' region motif; the sequence is PTADSLHLGH. The L-tyrosine site is built by Tyr-169 and Gln-173. Positions 229–233 match the 'KMSKS' region motif; that stretch reads KFGKS. Lys-232 contacts ATP. The S4 RNA-binding domain maps to 352 to 410; it reads LNIVELLVTSGIVNSKRQAREDVQNGAIYVNGERVQDLDYTLSDSDKIDGELTVIRRGK.

It belongs to the class-I aminoacyl-tRNA synthetase family. TyrS type 1 subfamily. In terms of assembly, homodimer.

It is found in the cytoplasm. The catalysed reaction is tRNA(Tyr) + L-tyrosine + ATP = L-tyrosyl-tRNA(Tyr) + AMP + diphosphate + H(+). Catalyzes the attachment of tyrosine to tRNA(Tyr) in a two-step reaction: tyrosine is first activated by ATP to form Tyr-AMP and then transferred to the acceptor end of tRNA(Tyr). The polypeptide is Tyrosine--tRNA ligase (Streptococcus suis (strain 98HAH33)).